Here is a 629-residue protein sequence, read N- to C-terminus: tRNA uridine 5-carboxymethylaminomethyl modification enzyme MnmG (629 aa).

FAD-binding positions include 13–18, V125, and S180; that span reads GGGHAG. 273-287 is a binding site for NAD(+); sequence GPRYCPSIEDKVMRF. Residue Q370 coordinates FAD.

Belongs to the MnmG family. In terms of assembly, homodimer. Heterotetramer of two MnmE and two MnmG subunits. The cofactor is FAD.

It is found in the cytoplasm. NAD-binding protein involved in the addition of a carboxymethylaminomethyl (cmnm) group at the wobble position (U34) of certain tRNAs, forming tRNA-cmnm(5)s(2)U34. The chain is tRNA uridine 5-carboxymethylaminomethyl modification enzyme MnmG from Shigella flexneri serotype 5b (strain 8401).